Here is a 222-residue protein sequence, read N- to C-terminus: UPF0502 protein XCC4136 (222 aa).

The protein belongs to the UPF0502 family.

The chain is UPF0502 protein XCC4136 from Xanthomonas campestris pv. campestris (strain ATCC 33913 / DSM 3586 / NCPPB 528 / LMG 568 / P 25).